The primary structure comprises 189 residues: Molybdopterin synthase catalytic subunit (189 aa).

A compositionally biased stretch (polar residues) spans 1–30; sequence MSSLEISNSCFSPETRSPSSRQSVEDNASE. A disordered region spans residues 1 to 41; sequence MSSLEISNSCFSPETRSPSSRQSVEDNASEPSGKDVDDVQE. Phosphoserine is present on serine 20. Basic and acidic residues predominate over residues 32 to 41; it reads SGKDVDDVQE. Residues 143 to 144, lysine 159, and 166 to 168 contribute to the substrate site; these read HR and KKE.

The protein belongs to the MoaE family. MOCS2B subfamily. Heterotetramer; composed of 2 small (MOCS2A) and 2 large (MOCS2B) subunits.

It is found in the cytoplasm. It localises to the cytosol. It catalyses the reaction 2 [molybdopterin-synthase sulfur-carrier protein]-C-terminal-Gly-aminoethanethioate + cyclic pyranopterin phosphate + H2O = molybdopterin + 2 [molybdopterin-synthase sulfur-carrier protein]-C-terminal Gly-Gly + 2 H(+). The protein operates within cofactor biosynthesis; molybdopterin biosynthesis. Its function is as follows. Catalytic subunit of the molybdopterin synthase complex, a complex that catalyzes the conversion of precursor Z into molybdopterin. Acts by mediating the incorporation of 2 sulfur atoms from thiocarboxylated MOCS2A into precursor Z to generate a dithiolene group. The sequence is that of Molybdopterin synthase catalytic subunit from Mus musculus (Mouse).